We begin with the raw amino-acid sequence, 242 residues long: 1-(5-phosphoribosyl)-5-[(5-phosphoribosylamino)methylideneamino] imidazole-4-carboxamide isomerase (242 aa).

D10 serves as the catalytic Proton acceptor.

The protein belongs to the HisA/HisF family.

The protein resides in the cytoplasm. It catalyses the reaction 1-(5-phospho-beta-D-ribosyl)-5-[(5-phospho-beta-D-ribosylamino)methylideneamino]imidazole-4-carboxamide = 5-[(5-phospho-1-deoxy-D-ribulos-1-ylimino)methylamino]-1-(5-phospho-beta-D-ribosyl)imidazole-4-carboxamide. It functions in the pathway amino-acid biosynthesis; L-histidine biosynthesis; L-histidine from 5-phospho-alpha-D-ribose 1-diphosphate: step 4/9. The polypeptide is 1-(5-phosphoribosyl)-5-[(5-phosphoribosylamino)methylideneamino] imidazole-4-carboxamide isomerase (Corynebacterium diphtheriae (strain ATCC 700971 / NCTC 13129 / Biotype gravis)).